We begin with the raw amino-acid sequence, 945 residues long: Protein translocase subunit SecA (945 aa).

Residues Gln90, 108–112 (GEGKT), and Asp509 each bind ATP. Positions 533–568 (VKPEDGHKPPVPLQRRSESSGFGEDKDVTTDNSKPL) are disordered. The span at 547–561 (RRSESSGFGEDKDVT) shows a compositional bias: basic and acidic residues.

The protein belongs to the SecA family. As to quaternary structure, monomer and homodimer. Part of the essential Sec protein translocation apparatus which comprises SecA, SecYEG and auxiliary proteins SecDF. Other proteins may also be involved.

The protein resides in the cell inner membrane. The protein localises to the cellular thylakoid membrane. It localises to the cytoplasm. It catalyses the reaction ATP + H2O + cellular proteinSide 1 = ADP + phosphate + cellular proteinSide 2.. Part of the Sec protein translocase complex. Interacts with the SecYEG preprotein conducting channel. Has a central role in coupling the hydrolysis of ATP to the transfer of proteins into and across the cell membrane, serving as an ATP-driven molecular motor driving the stepwise translocation of polypeptide chains across the membrane. Its function is as follows. Probably participates in protein translocation into and across both the cytoplasmic and thylakoid membranes in cyanobacterial cells. This is Protein translocase subunit SecA from Prochlorococcus marinus (strain MIT 9211).